The following is a 275-amino-acid chain: Shikimate dehydrogenase (NADP(+)) (275 aa).

Shikimate contacts are provided by residues 19–21 (SKS) and threonine 66. Lysine 70 functions as the Proton acceptor in the catalytic mechanism. Glutamate 82 contacts NADP(+). Shikimate is bound by residues asparagine 91 and aspartate 106. NADP(+) is bound by residues 130-134 (GAGGA), 154-159 (NRTASK), and methionine 217. Position 219 (tyrosine 219) interacts with shikimate. Glycine 241 contacts NADP(+).

This sequence belongs to the shikimate dehydrogenase family. Homodimer.

The catalysed reaction is shikimate + NADP(+) = 3-dehydroshikimate + NADPH + H(+). Its pathway is metabolic intermediate biosynthesis; chorismate biosynthesis; chorismate from D-erythrose 4-phosphate and phosphoenolpyruvate: step 4/7. Functionally, involved in the biosynthesis of the chorismate, which leads to the biosynthesis of aromatic amino acids. Catalyzes the reversible NADPH linked reduction of 3-dehydroshikimate (DHSA) to yield shikimate (SA). This Colwellia psychrerythraea (strain 34H / ATCC BAA-681) (Vibrio psychroerythus) protein is Shikimate dehydrogenase (NADP(+)).